A 338-amino-acid chain; its full sequence is MKRLALALKQRKVASWKLEEVKELTELIKNSNTILIGNLEGFPADKLHEIRKKLRGKATIKVTKNTLFKIAAKNAGIDIEKLEQYLTGPNVFIFTKDNPFITNMFFENYKLRRYAMPGDKAEEEVVIPAGDTGMPAGPILSVFGKLKVQTKVQDGKVHVVKDTVVAKPGDVIPAEALPILQKLGIMPVYVKLKIKVAYHEGLVIPAESLKLDLEGYRSNITEAYRNAFTLAVEIAYPTPDVLKFTISKVFKNAIALASEIGYITPESAQAVISKAVAKAYALATAIGGKVDLGVQLPTVQQSQSQQPAAEEKKEEKKEEEKKGPSEEEIASGLASLFG.

The disordered stretch occupies residues 298–338 (TVQQSQSQQPAAEEKKEEKKEEEKKGPSEEEIASGLASLFG). Positions 309 to 325 (AEEKKEEKKEEEKKGPS) are enriched in basic and acidic residues.

The protein belongs to the universal ribosomal protein uL10 family. In terms of assembly, part of the 50S ribosomal subunit. Forms part of the ribosomal stalk which helps the ribosome interact with GTP-bound translation factors. Forms a heptameric L10(L12)2(L12)2(L12)2 complex, where L10 forms an elongated spine to which the L12 dimers bind in a sequential fashion.

Functionally, forms part of the ribosomal stalk, playing a central role in the interaction of the ribosome with GTP-bound translation factors. The polypeptide is Large ribosomal subunit protein uL10 (Saccharolobus solfataricus (strain ATCC 35092 / DSM 1617 / JCM 11322 / P2) (Sulfolobus solfataricus)).